A 338-amino-acid polypeptide reads, in one-letter code: Porphobilinogen deaminase (338 aa).

The residue at position 265 (Cys265) is an S-(dipyrrolylmethanemethyl)cysteine.

It belongs to the HMBS family. Dipyrromethane is required as a cofactor.

The enzyme catalyses 4 porphobilinogen + H2O = hydroxymethylbilane + 4 NH4(+). Its pathway is porphyrin-containing compound metabolism; protoporphyrin-IX biosynthesis; coproporphyrinogen-III from 5-aminolevulinate: step 2/4. In terms of biological role, tetrapolymerization of the monopyrrole PBG into the hydroxymethylbilane pre-uroporphyrinogen in several discrete steps. The protein is Porphobilinogen deaminase (HEM3) of Yarrowia lipolytica (strain CLIB 122 / E 150) (Yeast).